The sequence spans 256 residues: Small ribosomal subunit protein eS1 (256 aa).

Ala2 is subject to N-acetylalanine; partial.

This sequence belongs to the eukaryotic ribosomal protein eS1 family. In terms of assembly, component of the small ribosomal subunit. Mature ribosomes consist of a small (40S) and a large (60S) subunit. The 40S subunit contains about 33 different proteins and 1 molecule of RNA (18S). The 60S subunit contains about 49 different proteins and 3 molecules of RNA (25S, 5.8S and 5S).

The protein resides in the cytoplasm. The sequence is that of Small ribosomal subunit protein eS1 from Komagataella phaffii (strain GS115 / ATCC 20864) (Yeast).